We begin with the raw amino-acid sequence, 1340 residues long: DNA-directed RNA polymerase subunit beta (1340 aa).

It belongs to the RNA polymerase beta chain family. As to quaternary structure, the RNAP catalytic core consists of 2 alpha, 1 beta, 1 beta' and 1 omega subunit. When a sigma factor is associated with the core the holoenzyme is formed, which can initiate transcription.

The enzyme catalyses RNA(n) + a ribonucleoside 5'-triphosphate = RNA(n+1) + diphosphate. DNA-dependent RNA polymerase catalyzes the transcription of DNA into RNA using the four ribonucleoside triphosphates as substrates. This chain is DNA-directed RNA polymerase subunit beta, found in Baumannia cicadellinicola subsp. Homalodisca coagulata.